The primary structure comprises 156 residues: Small ribosomal subunit protein uS7 (156 aa).

Belongs to the universal ribosomal protein uS7 family. Part of the 30S ribosomal subunit. Contacts proteins S9 and S11.

One of the primary rRNA binding proteins, it binds directly to 16S rRNA where it nucleates assembly of the head domain of the 30S subunit. Is located at the subunit interface close to the decoding center, probably blocks exit of the E-site tRNA. This chain is Small ribosomal subunit protein uS7, found in Methylobacterium nodulans (strain LMG 21967 / CNCM I-2342 / ORS 2060).